Reading from the N-terminus, the 320-residue chain is Sensor histidine kinase YbdK (320 aa).

The chain crosses the membrane as a helical span at residues 1 to 21 (MLLFTAVISVPMLLLAVSVLM). The Extracellular segment spans residues 22–41 (SVIYDSMFKPMNHGMPFHRS). A helical membrane pass occupies residues 42–62 (FAYPAMIVVFLISLLLLAFLF). The Cytoplasmic portion of the chain corresponds to 63 to 320 (SKSIHSLLHK…NGTGFLFSKE (258 aa)). Residues 67-120 (HSLLHKINLLNQTIRHLASDQRVPDKIEVKRADEIGELIKSVNLLIERTTYREL) form the HAMP domain. The Histidine kinase domain occupies 135 to 320 (KLRHDINTPL…NGTGFLFSKE (186 aa)). His-138 carries the post-translational modification Phosphohistidine; by autocatalysis.

The protein resides in the cell membrane. The catalysed reaction is ATP + protein L-histidine = ADP + protein N-phospho-L-histidine.. Functionally, member of the two-component regulatory system YbdK/YbdJ. Probably activates YbdJ by phosphorylation. This is Sensor histidine kinase YbdK (ybdK) from Bacillus subtilis (strain 168).